Reading from the N-terminus, the 82-residue chain is Cytochrome b559 subunit alpha (82 aa).

A helical transmembrane segment spans residues 21–35 (VIHSITVPALFIAGW). Histidine 23 is a heme binding site.

It belongs to the PsbE/PsbF family. Heterodimer of an alpha subunit and a beta subunit. PSII is composed of 1 copy each of membrane proteins PsbA, PsbB, PsbC, PsbD, PsbE, PsbF, PsbH, PsbI, PsbJ, PsbK, PsbL, PsbM, PsbT, PsbX, PsbY, PsbZ, Psb30/Ycf12, at least 3 peripheral proteins of the oxygen-evolving complex and a large number of cofactors. It forms dimeric complexes. It depends on heme b as a cofactor.

It localises to the plastid. The protein resides in the chloroplast thylakoid membrane. This b-type cytochrome is tightly associated with the reaction center of photosystem II (PSII). PSII is a light-driven water:plastoquinone oxidoreductase that uses light energy to abstract electrons from H(2)O, generating O(2) and a proton gradient subsequently used for ATP formation. It consists of a core antenna complex that captures photons, and an electron transfer chain that converts photonic excitation into a charge separation. The protein is Cytochrome b559 subunit alpha of Chlamydomonas reinhardtii (Chlamydomonas smithii).